The chain runs to 187 residues: Serine/arginine-rich splicing factor RSZ21 (187 aa).

The 72-residue stretch at 2 to 73 (TRVYVGNLDP…WRVELSHKDK (72 aa)) folds into the RRM domain. Disordered regions lie at residues 68–89 (LSHKDKGGRGGGGGRRGGIEDS) and 105–187 (RRGR…ANGV). The CCHC-type zinc-finger motif lies at 89-106 (SKCYECGELGHFARECRR). Over residues 107-122 (GRGSVRRRSPSPRRRR) the composition is skewed to basic residues. Residues S123, S132, S134, S140, S146, and S159 each carry the phosphoserine modification. Basic residues predominate over residues 136–155 (RGRRSPPRRRSVTPPRRGRS). Basic and acidic residues predominate over residues 165 to 177 (SRRDSPRRRDSPY). Over residues 178-187 (GRRSPYANGV) the composition is skewed to low complexity. Phosphoserine is present on S181.

The protein belongs to the splicing factor SR family. RSZ subfamily. As to quaternary structure, component of the spliceosome. Interacts with SNRNP35, AFC2, CYP59, RS2Z33 and RNU1. Interacts with MOS14. In terms of processing, extensively phosphorylated on serine residues in the RS domain. Phosphorylated by AFC2. In terms of tissue distribution, expressed in roots, leaves, flowers and siliques.

The protein resides in the nucleus speckle. Its function is as follows. Probably involved in intron recognition and spliceosome assembly. In Arabidopsis thaliana (Mouse-ear cress), this protein is Serine/arginine-rich splicing factor RSZ21 (RSZ21).